A 541-amino-acid chain; its full sequence is Chloride channel CLIC-like protein 1 (541 aa).

A signal peptide spans 1 to 18 (MLCSLLLCGCLLLITGYA). The Lumenal portion of the chain corresponds to 19 to 184 (HDDDWIDPTD…EDYFGVDPYN (166 aa)). A helical transmembrane segment spans residues 185 to 205 (VFMVLLCLLCIVALVATELWT). Residues 206–217 (YVRWHTQLKRVC) are Cytoplasmic-facing. Residues 218-238 (IISFLVSLGWNWIYLYKVAFA) traverse the membrane as a helical segment. Topologically, residues 239 to 329 (QHQANVAKMA…GEFIKALMKE (91 aa)) are lumenal. Residues 330-350 (IPVLLQIPVLVILALAVLGFC) traverse the membrane as a helical segment. At 351-541 (YGAGQSVPML…GTDPVSSPCG (191 aa)) the chain is on the cytoplasmic side. Positions 362–381 (HFRGPEREPPRALEPDDRRR) are disordered. A compositionally biased stretch (basic and acidic residues) spans 364–381 (RGPEREPPRALEPDDRRR). 2 positions are modified to phosphoserine: Ser-434 and Ser-438. Thr-482 is modified (phosphothreonine). The residue at position 504 (Ser-504) is a Phosphoserine. Residues 511-522 (QLKTDSECRPHS) are compositionally biased toward basic and acidic residues. A disordered region spans residues 511–541 (QLKTDSECRPHSTEAAAAAARGTDPVSSPCG).

Belongs to the chloride channel MCLC family. In terms of assembly, homomultimers. Interacts with mitochondrial protein PIGBOS1 (via C-terminus); the interaction occurs at the mitochondria-associated endoplasmic reticulum (ER) membrane, a zone of contact between the ER and mitochondrial membranes, but does not appear to play a role in ER-mitochondria tethering and is not affected by ER stress. Interacts with CALR. As to expression, expressed in testis (spermatocytes), liver and lung (at protein level). Expressed in spleen, liver, testis, kidney, heart, brain and lung.

Its subcellular location is the endoplasmic reticulum membrane. The catalysed reaction is chloride(in) = chloride(out). It catalyses the reaction bromide(in) = bromide(out). The enzyme catalyses nitrate(in) = nitrate(out). It carries out the reaction fluoride(in) = fluoride(out). Functionally, anion-selective channel with Ca(2+)-dependent and voltage-independent gating. Permeable to small monovalent anions with selectivity for bromide &gt; chloride &gt; nitrate &gt; fluoride. Operates in the endoplasmic reticulum (ER) membrane where it mediates chloride efflux to compensate for the loss of positive charges from the ER lumen upon Ca(2+) release. Contributes to the maintenance of ER Ca(2+) pools and activation of unfolded protein response to prevent accumulation of misfolded proteins in the ER lumen. Particularly involved in ER homeostasis mechanisms underlying motor neurons and retinal photoreceptors survival. This is Chloride channel CLIC-like protein 1 from Rattus norvegicus (Rat).